Here is a 452-residue protein sequence, read N- to C-terminus: Netrin-5 (452 aa).

The first 34 residues, 1–34, serve as a signal peptide directing secretion; the sequence is MTDYRTLFSSPGAGSTVTTPITLSLLLLLSQATS. Intrachain disulfides connect Cys173/Cys182, Cys175/Cys191, Cys193/Cys202, Cys205/Cys225, Cys228/Cys240, Cys230/Cys247, Cys249/Cys258, Cys261/Cys275, Cys298/Cys376, Cys302/Cys378, and Cys317/Cys438. 2 Laminin EGF-like domains span residues 173-227 and 228-277; these read CQCH…PCLP and CQCH…PCQR. Positions 298–438 constitute an NTR domain; that stretch reads CQGYCNVSVS…LQQKERGGAC (141 aa). Asn303 carries an N-linked (GlcNAc...) asparagine glycan.

The protein localises to the secreted. In terms of biological role, plays a role in neurogenesis. Prevents motor neuron cell body migration out of the neural tube. This Mus musculus (Mouse) protein is Netrin-5 (Ntn5).